The chain runs to 118 residues: Large ribosomal subunit protein bL19 (118 aa).

The protein belongs to the bacterial ribosomal protein bL19 family.

Functionally, this protein is located at the 30S-50S ribosomal subunit interface and may play a role in the structure and function of the aminoacyl-tRNA binding site. This Marinobacter nauticus (strain ATCC 700491 / DSM 11845 / VT8) (Marinobacter aquaeolei) protein is Large ribosomal subunit protein bL19.